The primary structure comprises 546 residues: Chaperonin GroEL 1 (546 aa).

Residues 30–33, K51, 87–91, G415, 479–481, and D495 contribute to the ATP site; these read TLGP, DGTTT, and NAA.

It belongs to the chaperonin (HSP60) family. In terms of assembly, forms a cylinder of 14 subunits composed of two heptameric rings stacked back-to-back. Interacts with the co-chaperonin GroES.

It is found in the cytoplasm. It catalyses the reaction ATP + H2O + a folded polypeptide = ADP + phosphate + an unfolded polypeptide.. Functionally, together with its co-chaperonin GroES, plays an essential role in assisting protein folding. The GroEL-GroES system forms a nano-cage that allows encapsulation of the non-native substrate proteins and provides a physical environment optimized to promote and accelerate protein folding. The protein is Chaperonin GroEL 1 of Paraburkholderia xenovorans (strain LB400).